The primary structure comprises 249 residues: NADH-quinone oxidoreductase subunit C (249 aa).

The tract at residues 1–29 (MTENQTTPDPGEPGSSADRPGGLVPTGDS) is disordered.

It belongs to the complex I 30 kDa subunit family. As to quaternary structure, NDH-1 is composed of 14 different subunits. Subunits NuoB, C, D, E, F, and G constitute the peripheral sector of the complex.

The protein resides in the cell membrane. It carries out the reaction a quinone + NADH + 5 H(+)(in) = a quinol + NAD(+) + 4 H(+)(out). Functionally, NDH-1 shuttles electrons from NADH, via FMN and iron-sulfur (Fe-S) centers, to quinones in the respiratory chain. The immediate electron acceptor for the enzyme in this species is believed to be a menaquinone. Couples the redox reaction to proton translocation (for every two electrons transferred, four hydrogen ions are translocated across the cytoplasmic membrane), and thus conserves the redox energy in a proton gradient. This chain is NADH-quinone oxidoreductase subunit C, found in Saccharopolyspora erythraea (strain ATCC 11635 / DSM 40517 / JCM 4748 / NBRC 13426 / NCIMB 8594 / NRRL 2338).